Consider the following 103-residue polypeptide: Putative double-stranded DNA mimic protein HAPS_1002 (103 aa).

This sequence belongs to the putative dsDNA mimic protein family.

Functionally, may act as a double-stranded DNA (dsDNA) mimic. Probably regulates the activity of a dsDNA-binding protein. This is Putative double-stranded DNA mimic protein HAPS_1002 from Glaesserella parasuis serovar 5 (strain SH0165) (Haemophilus parasuis).